A 251-amino-acid polypeptide reads, in one-letter code: Isoprenyl transferase (251 aa).

Aspartate 24 is an active-site residue. Aspartate 24 is a binding site for Mg(2+). Substrate is bound by residues 25 to 28 (GNGR), tryptophan 29, arginine 37, histidine 41, and 69 to 71 (STE). Residue asparagine 72 is the Proton acceptor of the active site. Residues tryptophan 73, arginine 75, arginine 186, and 192–194 (RIS) contribute to the substrate site. Glutamate 205 provides a ligand contact to Mg(2+).

This sequence belongs to the UPP synthase family. Homodimer. The cofactor is Mg(2+).

Its function is as follows. Catalyzes the condensation of isopentenyl diphosphate (IPP) with allylic pyrophosphates generating different type of terpenoids. The polypeptide is Isoprenyl transferase (Chromobacterium violaceum (strain ATCC 12472 / DSM 30191 / JCM 1249 / CCUG 213 / NBRC 12614 / NCIMB 9131 / NCTC 9757 / MK)).